We begin with the raw amino-acid sequence, 59 residues long: Photosystem II reaction center protein K (59 aa).

A propeptide spanning residues 1-22 (MLNIFSLICLNSALYSSSFFFG) is cleaved from the precursor. The chain crosses the membrane as a helical span at residues 30–50 (FLSPIVDFMPVIPLFFFLLAF).

In terms of assembly, PSII is composed of 1 copy each of membrane proteins PsbA, PsbB, PsbC, PsbD, PsbE, PsbF, PsbH, PsbI, PsbJ, PsbK, PsbL, PsbM, PsbT, PsbX, PsbY, PsbZ, Psb30/Ycf12, at least 3 peripheral proteins of the oxygen-evolving complex and a large number of cofactors. It forms dimeric complexes. This protein, PsbL and plastoquinone-9 are found in PSII dimers but not seen in PSII monomers.

It localises to the plastid. The protein localises to the chloroplast thylakoid membrane. One of the components of the core complex of photosystem II (PSII). PSII is a light-driven water:plastoquinone oxidoreductase that uses light energy to abstract electrons from H(2)O, generating O(2) and a proton gradient subsequently used for ATP formation. It consists of a core antenna complex that captures photons, and an electron transfer chain that converts photonic excitation into a charge separation. May be involved in PSII dimerization. Its function is as follows. One of the components of the core complex of photosystem II (PSII). PSII is a light-driven water:plastoquinone oxidoreductase that uses light energy to abstract electrons from H(2)O, generating O(2) and a proton gradient subsequently used for ATP formation. It consists of a core antenna complex that captures photons, and an electron transfer chain that converts photonic excitation into a charge separation. The protein is Photosystem II reaction center protein K of Spinacia oleracea (Spinach).